The following is a 147-amino-acid chain: 6,7-dimethyl-8-ribityllumazine synthase (147 aa).

5-amino-6-(D-ribitylamino)uracil contacts are provided by residues phenylalanine 16, threonine 48 to aspartate 50, and alanine 73 to isoleucine 75. Aspartate 78–threonine 79 provides a ligand contact to (2S)-2-hydroxy-3-oxobutyl phosphate. The active-site Proton donor is the histidine 81. Leucine 106 contributes to the 5-amino-6-(D-ribitylamino)uracil binding site. Position 121 (arginine 121) interacts with (2S)-2-hydroxy-3-oxobutyl phosphate.

The protein belongs to the DMRL synthase family.

It catalyses the reaction (2S)-2-hydroxy-3-oxobutyl phosphate + 5-amino-6-(D-ribitylamino)uracil = 6,7-dimethyl-8-(1-D-ribityl)lumazine + phosphate + 2 H2O + H(+). It functions in the pathway cofactor biosynthesis; riboflavin biosynthesis; riboflavin from 2-hydroxy-3-oxobutyl phosphate and 5-amino-6-(D-ribitylamino)uracil: step 1/2. In terms of biological role, catalyzes the formation of 6,7-dimethyl-8-ribityllumazine by condensation of 5-amino-6-(D-ribitylamino)uracil with 3,4-dihydroxy-2-butanone 4-phosphate. This is the penultimate step in the biosynthesis of riboflavin. This chain is 6,7-dimethyl-8-ribityllumazine synthase, found in Aeropyrum pernix (strain ATCC 700893 / DSM 11879 / JCM 9820 / NBRC 100138 / K1).